The sequence spans 219 residues: MASASEPPASPRDAADQNFDYMFKLLLIGNSSVGKTSFLFRYADDSFTPAFVSTVGIDFKVKTVYRHDKRIKLQIWDTAGQERYRTITTAYYRGAMGFLLMYDIANQESFTAVQDWATQIKTYSWDNAQVILVGNKCDLEDERVVSAEDGQRLAGDLGFEFFEASAKENINVKQVFERLVDIICDKMNESLEPSSSPGSNGKGPALGDTPPPQPSSCGC.

Alanine 2 is modified (N-acetylalanine). 29-37 contributes to the GDP binding site; sequence GNSSVGKTS. GTP-binding residues include serine 31, serine 32, valine 33, glycine 34, lysine 35, threonine 36, serine 37, proline 49, and serine 53. Threonine 36 contacts Mg(2+). The Switch 1 signature appears at 49-58; the sequence is PAFVSTVGID. Mg(2+)-binding residues include threonine 54 and aspartate 77. Residue glycine 80 participates in GTP binding. Positions 80-96 match the Switch 2 motif; sequence GQERYRTITTAYYRGAM. Threonine 86 carries the post-translational modification Phosphothreonine. GTP contacts are provided by asparagine 135, lysine 136, aspartate 138, alanine 166, and lysine 167. Residues 135–138 and 165–167 each bind GDP; these read NKCD and SAK. Serine 190 carries the phosphoserine modification. Residues 190–219 are disordered; it reads SLEPSSSPGSNGKGPALGDTPPPQPSSCGC. Over residues 193–203 the composition is skewed to low complexity; the sequence is PSSSPGSNGKG. Residues 209-219 are compositionally biased toward pro residues; sequence TPPPQPSSCGC. S-geranylgeranyl cysteine attachment occurs at residues cysteine 217 and cysteine 219. A Cysteine methyl ester; partial modification is found at cysteine 219.

It belongs to the small GTPase superfamily. Rab family. In terms of assembly, interacts with RIMS1, RIMS2, RPH3A and RPH3AL. Interacts with RAB3IP. The GTP-bound form interacts with REP15. Interacts with CHM; phosphorylation at Thr-86 disrupts this interaction. Interacts with MADD (via uDENN domain); the GTP-bound form is preferred for interaction. Mg(2+) is required as a cofactor. In fetal glands the majority of the proteins are methylated, whereas in neonatal and adult glands, only 50% are methylated. In terms of processing, phosphorylation of Thr-86 in the switch II region by LRRK2 prevents the association of RAB regulatory proteins, including CHM. As to expression, highest levels found in lung.

It localises to the cell membrane. It carries out the reaction GTP + H2O = GDP + phosphate + H(+). With respect to regulation, regulated by guanine nucleotide exchange factors (GEFs) which promote the exchange of bound GDP for free GTP. Regulated by GTPase activating proteins (GAPs) which increase the GTP hydrolysis activity. Inhibited by GDP dissociation inhibitors (GDIs) which prevent Rab-GDP dissociation. The small GTPases Rab are key regulators of intracellular membrane trafficking, from the formation of transport vesicles to their fusion with membranes. Rabs cycle between an inactive GDP-bound form and an active GTP-bound form that is able to recruit to membranes different sets of downstream effectors directly responsible for vesicle formation, movement, tethering and fusion. RAB3D may be involved in the insulin-induced exocytosis of GLUT4-containing vesicles in adipocytes. This chain is GTP-binding protein Rab-3D, found in Rattus norvegicus (Rat).